The chain runs to 785 residues: Pre-rRNA-processing protein TSR1 homolog (785 aa).

The tract at residues 1–59 (MSTTGHRAGVFKKPSKPHKSWKGKRTKGEITSENRGREGVKQLTRSAHSTHRTISKDAR) is disordered. A compositionally biased stretch (basic residues) spans 9 to 25 (GVFKKPSKPHKSWKGKR). Over residues 26–40 (TKGEITSENRGREGV) the composition is skewed to basic and acidic residues. The region spanning 83 to 243 (APCLVTVVSL…LRILNETKKK (161 aa)) is the Bms1-type G domain. Residues 307-426 (PHPLKAHNKT…GETTASEMMF (120 aa)) are disordered. Residues 376 to 409 (LDDEDDEDEEDSDEDMDDSDNEEVEDDSEEEEPM) are compositionally biased toward acidic residues.

The protein belongs to the TRAFAC class translation factor GTPase superfamily. Bms1-like GTPase family. TSR1 subfamily.

The protein localises to the nucleus. It is found in the nucleolus. Required during maturation of the 40S ribosomal subunit in the nucleolus. This Caenorhabditis elegans protein is Pre-rRNA-processing protein TSR1 homolog (tag-151).